The chain runs to 572 residues: Arginine--tRNA ligase (572 aa).

The 'HIGH' region signature appears at 122–132 (PNLAKEMHVGH).

Belongs to the class-I aminoacyl-tRNA synthetase family. Monomer.

The protein localises to the cytoplasm. The enzyme catalyses tRNA(Arg) + L-arginine + ATP = L-arginyl-tRNA(Arg) + AMP + diphosphate. The polypeptide is Arginine--tRNA ligase (Neisseria meningitidis serogroup B (strain ATCC BAA-335 / MC58)).